Reading from the N-terminus, the 143-residue chain is Large ribosomal subunit protein uL11 (143 aa).

Belongs to the universal ribosomal protein uL11 family. Part of the ribosomal stalk of the 50S ribosomal subunit. Interacts with L10 and the large rRNA to form the base of the stalk. L10 forms an elongated spine to which L12 dimers bind in a sequential fashion forming a multimeric L10(L12)X complex. Post-translationally, one or more lysine residues are methylated.

Functionally, forms part of the ribosomal stalk which helps the ribosome interact with GTP-bound translation factors. This chain is Large ribosomal subunit protein uL11, found in Bifidobacterium longum (strain DJO10A).